A 260-amino-acid chain; its full sequence is Cytochrome c oxidase subunit 2 (260 aa).

Over 1-43 the chain is Mitochondrial intermembrane; it reads MILRLLECRFFTIALCDAAEPWQLGFQDAATPMMQGIIDLHHD. A helical membrane pass occupies residues 44–64; that stretch reads IFFFLILILVFVLWMLVRALW. Residues 65–84 are Mitochondrial matrix-facing; it reads HFNEQTNPIPQRIVHGTTIE. Residues 85-105 form a helical membrane-spanning segment; that stretch reads IIWTIFPSVILLFIAIPSFAL. Over 106–260 the chain is Mitochondrial intermembrane; the sequence is LYSMDGVLVD…VSNQLILQTN (155 aa). The Cu cation site is built by histidine 189, cysteine 224, glutamate 226, cysteine 228, histidine 232, and methionine 235. Glutamate 226 is a Mg(2+) binding site.

This sequence belongs to the cytochrome c oxidase subunit 2 family. Component of the cytochrome c oxidase (complex IV, CIV), a multisubunit enzyme composed of a catalytic core of 3 subunits and several supernumerary subunits. The complex exists as a monomer or a dimer and forms supercomplexes (SCs) in the inner mitochondrial membrane with ubiquinol-cytochrome c oxidoreductase (cytochrome b-c1 complex, complex III, CIII). Requires Cu cation as cofactor.

The protein resides in the mitochondrion inner membrane. The catalysed reaction is 4 Fe(II)-[cytochrome c] + O2 + 8 H(+)(in) = 4 Fe(III)-[cytochrome c] + 2 H2O + 4 H(+)(out). In terms of biological role, component of the cytochrome c oxidase, the last enzyme in the mitochondrial electron transport chain which drives oxidative phosphorylation. The respiratory chain contains 3 multisubunit complexes succinate dehydrogenase (complex II, CII), ubiquinol-cytochrome c oxidoreductase (cytochrome b-c1 complex, complex III, CIII) and cytochrome c oxidase (complex IV, CIV), that cooperate to transfer electrons derived from NADH and succinate to molecular oxygen, creating an electrochemical gradient over the inner membrane that drives transmembrane transport and the ATP synthase. Cytochrome c oxidase is the component of the respiratory chain that catalyzes the reduction of oxygen to water. Electrons originating from reduced cytochrome c in the intermembrane space (IMS) are transferred via the dinuclear copper A center (CU(A)) of subunit 2 and heme A of subunit 1 to the active site in subunit 1, a binuclear center (BNC) formed by heme A3 and copper B (CU(B)). The BNC reduces molecular oxygen to 2 water molecules using 4 electrons from cytochrome c in the IMS and 4 protons from the mitochondrial matrix. The sequence is that of Cytochrome c oxidase subunit 2 (COX2) from Zea mays (Maize).